Reading from the N-terminus, the 229-residue chain is AA9 family lytic polysaccharide monooxygenase E (229 aa).

A signal peptide spans 1–19; it reads MRSSDITFVLLSVVATVRS. H20 lines the Cu(2+) pocket. A disulfide bridge connects residues C57 and C178. A glycan (N-linked (GlcNAc...) asparagine) is linked at N76. H99 provides a ligand contact to Cu(2+). 2 residues coordinate O2: H164 and Q173. Cu(2+) is bound at residue Y175. N217 carries N-linked (GlcNAc...) asparagine glycosylation.

Belongs to the polysaccharide monooxygenase AA9 family. The cofactor is Cu(2+).

The protein resides in the secreted. The catalysed reaction is [(1-&gt;4)-beta-D-glucosyl]n+m + reduced acceptor + O2 = 4-dehydro-beta-D-glucosyl-[(1-&gt;4)-beta-D-glucosyl]n-1 + [(1-&gt;4)-beta-D-glucosyl]m + acceptor + H2O.. Functionally, lytic polysaccharide monooxygenase (LPMO) that depolymerizes crystalline and amorphous polysaccharides via the oxidation of scissile alpha- or beta-(1-4)-glycosidic bonds, yielding C1 and C4 oxidation products. Catalysis by LPMOs requires the reduction of the active-site copper from Cu(II) to Cu(I) by a reducing agent and H(2)O(2) or O(2) as a cosubstrate. The polypeptide is AA9 family lytic polysaccharide monooxygenase E (Botryotinia fuckeliana (strain B05.10) (Noble rot fungus)).